The sequence spans 220 residues: Ribose-5-phosphate isomerase A (220 aa).

Substrate-binding positions include 28-31 (TGST), 81-84 (DGAD), and 94-97 (KGGG). Glu103 functions as the Proton acceptor in the catalytic mechanism. Lys121 is a binding site for substrate.

It belongs to the ribose 5-phosphate isomerase family. In terms of assembly, homodimer.

The catalysed reaction is aldehydo-D-ribose 5-phosphate = D-ribulose 5-phosphate. The protein operates within carbohydrate degradation; pentose phosphate pathway; D-ribose 5-phosphate from D-ribulose 5-phosphate (non-oxidative stage): step 1/1. Its function is as follows. Catalyzes the reversible conversion of ribose-5-phosphate to ribulose 5-phosphate. The polypeptide is Ribose-5-phosphate isomerase A (Vesicomyosocius okutanii subsp. Calyptogena okutanii (strain HA)).